A 390-amino-acid polypeptide reads, in one-letter code: MKFVDEASVKIEAGDGGNGTVSFWREKFVAKGGPDGGDGGDGGDVYIQADENLNTLIDYRFQRFYNAERGENGRGGNCTGKRGKDMTMKVPVGTRAVDIHTNEIVAEVAEHGKKVMVGKGGWHGLGNTRFKSSVNRAPRQKTMGTKGEVRELRLELLLLADVGMLGLPNAGKSTFIRSVSAAKPKVADYPFTTLIPSLGVVSVVPEKSFVVADIPGLIEGAADGAGLGIRFLKHLERCRVLLHMIDILPIDGSDPIQNALTIIDELEQYSEKVAQKPRWLVFNKVDLMPEEEADEKIQEIVEALGWEGEYFKISAVNKIGTKDLCFKLGEFMENLPREVEAIEEEEKVNFMWDDYHKDAMAGKNVVTEDDDDWDDWDDEEDDGHVIYVRD.

Residues 1-159 (MKFVDEASVK…RELRLELLLL (159 aa)) form the Obg domain. An OBG-type G domain is found at 160 to 333 (ADVGMLGLPN…LCFKLGEFME (174 aa)). Residues 166–173 (GLPNAGKS), 191–195 (FTTLI), 213–216 (DIPG), 283–286 (NKVD), and 314–316 (SAV) contribute to the GTP site. Mg(2+) is bound by residues S173 and T193.

This sequence belongs to the TRAFAC class OBG-HflX-like GTPase superfamily. OBG GTPase family. In terms of assembly, monomer. The cofactor is Mg(2+).

It is found in the cytoplasm. Its function is as follows. An essential GTPase which binds GTP, GDP and possibly (p)ppGpp with moderate affinity, with high nucleotide exchange rates and a fairly low GTP hydrolysis rate. Plays a role in control of the cell cycle, stress response, ribosome biogenesis and in those bacteria that undergo differentiation, in morphogenesis control. This is GTPase Obg from Vibrio atlanticus (strain LGP32) (Vibrio splendidus (strain Mel32)).